The primary structure comprises 327 residues: Microtubule-associated protein RP/EB family member 2 (327 aa).

Residues 1–21 are disordered; the sequence is MPGPTQTLSPNGENNNDIIQD. Residue Ser9 is modified to Phosphoserine. The Calponin-homology (CH) domain maps to 57–159; that stretch reads TMSRHDIIAW…FIQWFKKFYD (103 aa). Residue Tyr167 is modified to Phosphotyrosine. Disordered stretches follow at residues 171–240 and 299–327; these read EARQ…DKDL and ASEE…QEEY. The DCTN1-binding stretch occupies residues 187 to 327; that stretch reads QIFNLPKKSH…EQQPPQQEEY (141 aa). Over residues 200–234 the composition is skewed to low complexity; it reads SPTAGAAKSSPAAKPGSTPSRPSSAKRASSSGSAS. Ser219 is subject to Phosphoserine. An EB1 C-terminal domain is found at 236–306; it reads SDKDLETQVI…LYASEEHEGH (71 aa). Positions 259-302 are APC-binding; sequence EGVEKERDFYFGKLREIELLCQEHGQENDDLVQRLMDVLYASEE. A compositionally biased stretch (basic and acidic residues) spans 300–317; it reads SEEHEGHTEEPEAEEQAH. The span at 318-327 shows a compositional bias: low complexity; it reads EQQPPQQEEY.

It belongs to the MAPRE family. In terms of assembly, interacts with DCTN1. Interacts with APC (via C-terminal). Interacts with monomeric and polymerized tubulin. Interacts with SLAIN1. Interacts (via the N-terminal region) with BAG1.

The protein localises to the cytoplasm. The protein resides in the cytoskeleton. May be involved in microtubule polymerization, and spindle function by stabilizing microtubules and anchoring them at centrosomes. May play a role in cell migration. The protein is Microtubule-associated protein RP/EB family member 2 (MAPRE2) of Pongo abelii (Sumatran orangutan).